Reading from the N-terminus, the 261-residue chain is X-box-binding protein 1 (261 aa).

Residues 1–185 (MVVVAAAPNP…VQAQLSPLQN (185 aa)) lie on the Cytoplasmic side of the membrane. The tract at residues 44–93 (RGASPEAASGGLPQARKRQRLTHLSPEEKALRRKLKNRVAAQTARDRKKA) is disordered. Residues Ser47 and Ser68 each carry the phosphoserine modification. A bZIP domain is found at 70–133 (EEKALRRKLK…HGLVVENQEL (64 aa)). The interval 72 to 94 (KALRRKLKNRVAAQTARDRKKAR) is basic motif. The tract at residues 75 to 92 (RRKLKNRVAAQTARDRKK) is nuclear localization signal (NLS); in isoforms 1 and isoform 2. The interval 98–133 (LEQQVVDLEEENQKLLLENQLLREKTHGLVVENQEL) is leucine-zipper. Residues 186-203 (ISPWILAVLTLQIQSLIS) traverse the membrane as a helical; Signal-anchor for type II membrane protein segment. Over 204–261 (CWAFWTTWTQSCSSNALPQSLPAWRSSQRSTQKDPVPYQPPFLCQWGRHQPSWKPLMN) the chain is Lumenal. Residues 235-261 (QKDPVPYQPPFLCQWGRHQPSWKPLMN) are necessary for the translational pausing of its own mRNA.

Belongs to the bZIP family. Isoform 2 interacts with SIRT1. Isoform 2 interacts with PIK3R1 and PIK3R2; the interactions are direct and induce translocation of XBP1 isoform 2 into the nucleus and the unfolded protein response (UPR) XBP1-dependent target genes activation in a ER stress- and/or insulin-dependent but PI3K-independent manner. Isoform 2 interacts with FOXO1; the interaction is direct and leads to FOXO1 ubiquitination and degradation via the proteasome pathway in hepatocytes. Isoform 1 interacts with HM13. Isoform 1 interacts with RNF139; the interaction induces ubiquitination and degradation of isoform 1. Isoform 1 interacts (via luminal domain) with DERL1; the interaction obviates the need for ectodomain shedding prior HM13/SPP-mediated XBP1 isoform 1 cleavage. Isoform 1 interacts with isoform 2; the interaction sequesters isoform 2 from the nucleus and enhances isoform 2 degradation in the cytoplasm. Isoform 1 interacts with HDAC3 and AKT1; the interactions occur in endothelial cell (EC) under disturbed flow. Isoform 1 interacts with the oncoprotein FOS. Isoform 2 interacts with ATF6; the interaction occurs in a ER stress-dependent manner and is required for DNA binding to the unfolded protein response element (UPRE). Isoform 2 interacts with PIK3R1; the interaction is direct and induces translocation of XBP1 isoform 2 into the nucleus and the unfolded protein response (UPR) XBP1-dependent target genes activation in a ER stress- and/or insulin-dependent but PI3K-independent manner. Acetylated by EP300; acetylation positively regulates the transcriptional activity of XBP1 isoform 2. Isoform 2 is deacetylated by SIRT1; deacetylation negatively regulates the transcriptional activity of XBP1 isoform 2. Post-translationally, ubiquitinated, leading to proteasome-mediated degradation in response to ER stress. In terms of processing, X-box-binding protein 1, cytoplasmic form and luminal form are produced by intramembrane proteolytic cleavage of ER membrane-anchored isoform 1 triggered by HM13/SPP in a DERL1-RNF139-dependent and VCP/p97-independent manner. X-box-binding protein 1, luminal form is ubiquitinated leading to proteasomal degradation. Expressed in plasma cells in rheumatoid synovium. Over-expressed in primary breast cancer and metastatic breast cancer cells. Isoform 1 and isoform 2 are expressed at higher level in proliferating as compared to confluent quiescent endothelial cells.

It is found in the endoplasmic reticulum. Its subcellular location is the nucleus. It localises to the cytoplasm. The protein localises to the endoplasmic reticulum membrane. The protein resides in the membrane. Functionally, functions as a transcription factor during endoplasmic reticulum (ER) stress by regulating the unfolded protein response (UPR). Required for cardiac myogenesis and hepatogenesis during embryonic development, and the development of secretory tissues such as exocrine pancreas and salivary gland. Involved in terminal differentiation of B lymphocytes to plasma cells and production of immunoglobulins. Modulates the cellular response to ER stress in a PIK3R-dependent manner. Binds to the cis-acting X box present in the promoter regions of major histocompatibility complex class II genes. Involved in VEGF-induced endothelial cell (EC) proliferation and retinal blood vessel formation during embryonic development but also for angiogenesis in adult tissues under ischemic conditions. Also functions as a major regulator of the UPR in obesity-induced insulin resistance and type 2 diabetes for the management of obesity and diabetes prevention. In terms of biological role, plays a role in the unconventional cytoplasmic splicing processing of its own mRNA triggered by the endoplasmic reticulum (ER) transmembrane endoribonuclease ERN1: upon ER stress, the emerging XBP1 polypeptide chain, as part of a mRNA-ribosome-nascent chain (R-RNC) complex, cotranslationally recruits its own unprocessed mRNA through transient docking to the ER membrane and translational pausing, therefore facilitating efficient IRE1-mediated XBP1 mRNA isoform 2 production. In endothelial cells (EC), associated with KDR, promotes IRE1-mediated XBP1 mRNA isoform 2 productions in a vascular endothelial growth factor (VEGF)-dependent manner, leading to EC proliferation and angiogenesis. Functions as a negative feed-back regulator of the potent transcription factor XBP1 isoform 2 protein levels through proteasome-mediated degradation, thus preventing the constitutive activation of the ER stress response signaling pathway. Inhibits the transactivation activity of XBP1 isoform 2 in myeloma cells. Acts as a weak transcriptional factor. Together with HDAC3, contributes to the activation of NFE2L2-mediated HMOX1 transcription factor gene expression in a PI(3)K/mTORC2/Akt-dependent signaling pathway leading to EC survival under disturbed flow/oxidative stress. Binds to the ER stress response element (ERSE) upon ER stress. Binds to the consensus 5'-GATGACGTG[TG]N(3)[AT]T-3' sequence related to cAMP responsive element (CRE)-like sequences. Binds the Tax-responsive element (TRE) present in the long terminal repeat (LTR) of T-cell leukemia virus type 1 (HTLV-I) and to the TPA response elements (TRE). Associates preferentially to the HDAC3 gene promoter region in a static flow-dependent manner. Binds to the CDH5/VE-cadherin gene promoter region. Its function is as follows. Functions as a stress-inducible potent transcriptional activator during endoplasmic reticulum (ER) stress by inducing unfolded protein response (UPR) target genes via binding to the UPR element (UPRE). Up-regulates target genes encoding ER chaperones and ER-associated degradation (ERAD) components to enhance the capacity of productive folding and degradation mechanism, respectively, in order to maintain the homeostasis of the ER under ER stress. Plays a role in the production of immunoglobulins and interleukin-6 in the presence of stimuli required for plasma cell differentiation. Induces phospholipid biosynthesis and ER expansion. Contributes to the VEGF-induced endothelial cell (EC) growth and proliferation in a Akt/GSK-dependent and/or -independent signaling pathway, respectively, leading to beta-catenin nuclear translocation and E2F2 gene expression. Promotes umbilical vein EC apoptosis and atherosclerotisis development in a caspase-dependent signaling pathway, and contributes to VEGF-induced EC proliferation and angiogenesis in adult tissues under ischemic conditions. Involved in the regulation of endostatin-induced autophagy in EC through BECN1 transcriptional activation. Plays a role as an oncogene by promoting tumor progression: stimulates zinc finger protein SNAI1 transcription to induce epithelial-to-mesenchymal (EMT) transition, cell migration and invasion of breast cancer cells. Involved in adipocyte differentiation by regulating lipogenic gene expression during lactation. Plays a role in the survival of both dopaminergic neurons of the substantia nigra pars compacta (SNpc), by maintaining protein homeostasis and of myeloma cells. Increases insulin sensitivity in the liver as a response to a high carbohydrate diet, resulting in improved glucose tolerance. Also improves glucose homeostasis in an ER stress- and/or insulin-independent manner through both binding and proteasome-induced degradation of the transcription factor FOXO1, hence resulting in suppression of gluconeogenic genes expression and in a reduction of blood glucose levels. Controls the induction of de novo fatty acid synthesis in hepatocytes by regulating the expression of a subset of lipogenic genes in an ER stress- and UPR-independent manner. Associates preferentially to the HDAC3 gene promoter region in a disturbed flow-dependent manner. Binds to the BECN1 gene promoter region. Binds to the CDH5/VE-cadherin gene promoter region. Binds to the ER stress response element (ERSE) upon ER stress. Binds to the 5'-CCACG-3' motif in the PPARG promoter. The protein is X-box-binding protein 1 of Homo sapiens (Human).